A 448-amino-acid polypeptide reads, in one-letter code: tRNA(Ile)-lysidine synthase (448 aa).

28–33 (STGVDS) is an ATP binding site.

Belongs to the tRNA(Ile)-lysidine synthase family.

It is found in the cytoplasm. The enzyme catalyses cytidine(34) in tRNA(Ile2) + L-lysine + ATP = lysidine(34) in tRNA(Ile2) + AMP + diphosphate + H(+). Ligates lysine onto the cytidine present at position 34 of the AUA codon-specific tRNA(Ile) that contains the anticodon CAU, in an ATP-dependent manner. Cytidine is converted to lysidine, thus changing the amino acid specificity of the tRNA from methionine to isoleucine. The protein is tRNA(Ile)-lysidine synthase of Lactiplantibacillus plantarum (strain ATCC BAA-793 / NCIMB 8826 / WCFS1) (Lactobacillus plantarum).